The following is a 282-amino-acid chain: Glucuronoxylan 4-O-methyltransferase 1 (282 aa).

A helical transmembrane segment spans residues 13 to 33; sequence VLLVFLLATLILIFIVRSTLT.

The protein belongs to the methyltransferase superfamily. In terms of tissue distribution, expressed in rosette leaves, stems, flowers and siliques.

The protein localises to the golgi apparatus membrane. It carries out the reaction glucuronoxylan D-glucuronate + n S-adenosyl-L-methionine = glucuronoxylan 4-O-methyl-D-glucuronate + n S-adenosyl-L-homocysteine + n H(+). Its function is as follows. Methyltransferase catalyzing 4-O-methylation of glucuronic acid side chains on xylan. This is Glucuronoxylan 4-O-methyltransferase 1 (GXM1) from Arabidopsis thaliana (Mouse-ear cress).